The primary structure comprises 301 residues: Probable porphobilinogen deaminase (301 aa).

Residue cysteine 241 is modified to S-(dipyrrolylmethanemethyl)cysteine.

It belongs to the HMBS family. Requires dipyrromethane as cofactor.

It carries out the reaction 4 porphobilinogen + H2O = hydroxymethylbilane + 4 NH4(+). It participates in porphyrin-containing compound metabolism; protoporphyrin-IX biosynthesis; coproporphyrinogen-III from 5-aminolevulinate: step 2/4. In terms of biological role, tetrapolymerization of the monopyrrole PBG into the hydroxymethylbilane pre-uroporphyrinogen in several discrete steps. The sequence is that of Probable porphobilinogen deaminase from Pyrobaculum islandicum (strain DSM 4184 / JCM 9189 / GEO3).